Here is a 358-residue protein sequence, read N- to C-terminus: Glycerol-3-phosphate dehydrogenase [NAD(P)+] (358 aa).

Positions 33, 34, 54, and 128 each coordinate NADPH. 2 residues coordinate sn-glycerol 3-phosphate: Lys-128 and Gly-156. Residue Ala-160 coordinates NADPH. Sn-glycerol 3-phosphate contacts are provided by Lys-211, Asp-264, Ser-274, Arg-275, and Asn-276. Catalysis depends on Lys-211, which acts as the Proton acceptor. Residue Arg-275 participates in NADPH binding. 2 residues coordinate NADPH: Val-299 and Glu-301.

This sequence belongs to the NAD-dependent glycerol-3-phosphate dehydrogenase family.

It is found in the cytoplasm. It carries out the reaction sn-glycerol 3-phosphate + NAD(+) = dihydroxyacetone phosphate + NADH + H(+). The catalysed reaction is sn-glycerol 3-phosphate + NADP(+) = dihydroxyacetone phosphate + NADPH + H(+). It functions in the pathway membrane lipid metabolism; glycerophospholipid metabolism. Its function is as follows. Catalyzes the reduction of the glycolytic intermediate dihydroxyacetone phosphate (DHAP) to sn-glycerol 3-phosphate (G3P), the key precursor for phospholipid synthesis. This Saccharophagus degradans (strain 2-40 / ATCC 43961 / DSM 17024) protein is Glycerol-3-phosphate dehydrogenase [NAD(P)+].